The sequence spans 122 residues: Putative ankyrin repeat protein L22 (122 aa).

ANK repeat units follow at residues 3–32 (DNNY…DIKA), 33–62 (DDDY…DIRV), 63–92 (NNDY…NIRA), and 94–122 (DDYA…VLNQ).

The chain is Putative ankyrin repeat protein L22 from Acanthamoeba polyphaga (Amoeba).